We begin with the raw amino-acid sequence, 106 residues long: MMDSSPEKTNLELLYERVCEQGREFEVVFYPMLPRLYEMMLPSLEARLNFLSVGYRHVAFARYVHGDVDCVHREVMAQKMVLLTSILSKLLNVNGILEHQEYLNTE.

The protein belongs to the herpesviridae TRM2 protein family. In terms of assembly, associates with TRM1 and TRM3 to form the tripartite terminase complex.

It localises to the host nucleus. Functionally, component of the molecular motor that translocates viral genomic DNA in empty capsid during DNA packaging. Forms a tripartite terminase complex together with TRM1 and TRM3 in the host cytoplasm. Once the complex reaches the host nucleus, it interacts with the capsid portal vertex. This portal forms a ring in which genomic DNA is translocated into the capsid. In Human herpesvirus 6A (strain Uganda-1102) (HHV-6 variant A), this protein is Tripartite terminase subunit 2.